The following is a 160-amino-acid chain: Nucleotide-binding protein VV1636 (160 aa).

This sequence belongs to the YajQ family.

In terms of biological role, nucleotide-binding protein. The protein is Nucleotide-binding protein VV1636 of Vibrio vulnificus (strain YJ016).